The primary structure comprises 263 residues: Protein M1425_2021 (263 aa).

Belongs to the CinA family.

This chain is Protein M1425_2021, found in Saccharolobus islandicus (strain M.14.25 / Kamchatka #1) (Sulfolobus islandicus).